The chain runs to 372 residues: ATP phosphoribosyltransferase regulatory subunit (372 aa).

Belongs to the class-II aminoacyl-tRNA synthetase family. HisZ subfamily. Heteromultimer composed of HisG and HisZ subunits.

It localises to the cytoplasm. It participates in amino-acid biosynthesis; L-histidine biosynthesis; L-histidine from 5-phospho-alpha-D-ribose 1-diphosphate: step 1/9. In terms of biological role, required for the first step of histidine biosynthesis. May allow the feedback regulation of ATP phosphoribosyltransferase activity by histidine. The chain is ATP phosphoribosyltransferase regulatory subunit from Allorhizobium ampelinum (strain ATCC BAA-846 / DSM 112012 / S4) (Agrobacterium vitis (strain S4)).